The sequence spans 113 residues: Replication initiation control protein YabA (113 aa).

Residues H86, C88, C102, and C105 each coordinate Zn(2+).

This sequence belongs to the YabA family. In terms of assembly, homotetramer. Interacts with both DnaA and DnaN, acting as a bridge between these two proteins. Requires Zn(2+) as cofactor.

Its subcellular location is the cytoplasm. The protein resides in the nucleoid. Its function is as follows. Involved in control of chromosome replication initiation. Inhibits the cooperative binding of DnaA to the oriC region, thus negatively regulating initiation of chromosome replication. Inhibits the ability of DnaA-ATP to form a helix on DNA; does not disassemble preformed DnaA-DNA helices. Decreases the residence time of DnaA on the chromosome at its binding sites (oriC, replication forks and promoter-binding sites). Tethers DnaA to the replication machinery via the DNA polymerase beta sliding clamp subunit (dnaN). Associates with oriC and other DnaA targets on the chromosome in a DnaA-dependent manner. This chain is Replication initiation control protein YabA, found in Pediococcus pentosaceus (strain ATCC 25745 / CCUG 21536 / LMG 10740 / 183-1w).